A 229-amino-acid polypeptide reads, in one-letter code: Octanoyltransferase (229 aa).

Residues 47 to 225 (PSSPEAVWIL…SLAARFHLAW (179 aa)) enclose the BPL/LPL catalytic domain. Substrate is bound by residues 89-96 (RGGEVTHH), 156-158 (AIG), and 169-171 (GLA). The active-site Acyl-thioester intermediate is cysteine 187.

The protein belongs to the LipB family.

The protein resides in the cytoplasm. It catalyses the reaction octanoyl-[ACP] + L-lysyl-[protein] = N(6)-octanoyl-L-lysyl-[protein] + holo-[ACP] + H(+). It functions in the pathway protein modification; protein lipoylation via endogenous pathway; protein N(6)-(lipoyl)lysine from octanoyl-[acyl-carrier-protein]: step 1/2. Catalyzes the transfer of endogenously produced octanoic acid from octanoyl-acyl-carrier-protein onto the lipoyl domains of lipoate-dependent enzymes. Lipoyl-ACP can also act as a substrate although octanoyl-ACP is likely to be the physiological substrate. This is Octanoyltransferase from Synechococcus sp. (strain CC9902).